Consider the following 89-residue polypeptide: Small ribosomal subunit protein bS16 (89 aa).

It belongs to the bacterial ribosomal protein bS16 family.

In Desulforamulus reducens (strain ATCC BAA-1160 / DSM 100696 / MI-1) (Desulfotomaculum reducens), this protein is Small ribosomal subunit protein bS16.